The primary structure comprises 235 residues: UPF0758 protein CD630_11440 (235 aa).

The 123-residue stretch at lysine 113–isoleucine 235 folds into the MPN domain. Residues histidine 184, histidine 186, and aspartate 197 each contribute to the Zn(2+) site. The JAMM motif signature appears at histidine 184 to aspartate 197.

This sequence belongs to the UPF0758 family.

The sequence is that of UPF0758 protein CD630_11440 from Clostridioides difficile (strain 630) (Peptoclostridium difficile).